A 113-amino-acid chain; its full sequence is Small ribosomal subunit protein bS6 (113 aa).

This sequence belongs to the bacterial ribosomal protein bS6 family.

Its function is as follows. Binds together with bS18 to 16S ribosomal RNA. The chain is Small ribosomal subunit protein bS6 from Flavobacterium johnsoniae (strain ATCC 17061 / DSM 2064 / JCM 8514 / BCRC 14874 / CCUG 350202 / NBRC 14942 / NCIMB 11054 / UW101) (Cytophaga johnsonae).